Here is a 307-residue protein sequence, read N- to C-terminus: Aspartate carbamoyltransferase catalytic subunit (307 aa).

2 residues coordinate carbamoyl phosphate: arginine 59 and threonine 60. Lysine 87 contacts L-aspartate. Residues arginine 109, histidine 137, and glutamine 140 each coordinate carbamoyl phosphate. L-aspartate is bound by residues arginine 173 and arginine 223. Glycine 266 and proline 267 together coordinate carbamoyl phosphate.

This sequence belongs to the aspartate/ornithine carbamoyltransferase superfamily. ATCase family. In terms of assembly, heterododecamer (2C3:3R2) of six catalytic PyrB chains organized as two trimers (C3), and six regulatory PyrI chains organized as three dimers (R2).

It catalyses the reaction carbamoyl phosphate + L-aspartate = N-carbamoyl-L-aspartate + phosphate + H(+). It functions in the pathway pyrimidine metabolism; UMP biosynthesis via de novo pathway; (S)-dihydroorotate from bicarbonate: step 2/3. Functionally, catalyzes the condensation of carbamoyl phosphate and aspartate to form carbamoyl aspartate and inorganic phosphate, the committed step in the de novo pyrimidine nucleotide biosynthesis pathway. The sequence is that of Aspartate carbamoyltransferase catalytic subunit from Helicobacter pylori (strain ATCC 700392 / 26695) (Campylobacter pylori).